Reading from the N-terminus, the 456-residue chain is RuvB-like helicase 1 (456 aa).

70–77 is an ATP binding site; it reads GPPGTGKT.

This sequence belongs to the RuvB family. Forms homohexameric rings. May form a dodecamer with rept made of two stacked hexameric rings. Component of the chromatin remodeling Ino80 complex.

The protein resides in the nucleus. It catalyses the reaction ATP + H2O = ADP + phosphate + H(+). Acts as a transcriptional coactivator in Wg signaling caused by altered arm signaling. Pont and rept interfere antagonistically with nuclear arm signaling function, and are required to enhance or reduce arm activity, respectively. Also an essential cofactor for the normal function of Myc; required for cellular proliferation and growth. Functionally, proposed core component of the chromatin remodeling Ino80 complex which is involved in transcriptional regulation, DNA replication and probably DNA repair. The chain is RuvB-like helicase 1 from Drosophila pseudoobscura pseudoobscura (Fruit fly).